The chain runs to 488 residues: Ribulose bisphosphate carboxylase large chain (488 aa).

Asn-127 and Thr-177 together coordinate substrate. Lys-179 serves as the catalytic Proton acceptor. Residue Lys-181 coordinates substrate. The Mg(2+) site is built by Lys-205, Asp-207, and Glu-208. Lys-205 is modified (N6-carboxylysine). His-297 functions as the Proton acceptor in the catalytic mechanism. Residues Arg-298, His-330, and Ser-382 each contribute to the substrate site.

This sequence belongs to the RuBisCO large chain family. Type I subfamily. In terms of assembly, heterohexadecamer of 8 large chains and 8 small chains. It depends on Mg(2+) as a cofactor.

It localises to the plastid. The protein resides in the chloroplast. It catalyses the reaction 2 (2R)-3-phosphoglycerate + 2 H(+) = D-ribulose 1,5-bisphosphate + CO2 + H2O. It carries out the reaction D-ribulose 1,5-bisphosphate + O2 = 2-phosphoglycolate + (2R)-3-phosphoglycerate + 2 H(+). Functionally, ruBisCO catalyzes two reactions: the carboxylation of D-ribulose 1,5-bisphosphate, the primary event in carbon dioxide fixation, as well as the oxidative fragmentation of the pentose substrate in the photorespiration process. Both reactions occur simultaneously and in competition at the same active site. In Porphyridium aerugineum (Red microalga), this protein is Ribulose bisphosphate carboxylase large chain.